The sequence spans 97 residues: Aspartyl/glutamyl-tRNA(Asn/Gln) amidotransferase subunit C (97 aa).

Residues 59-78 (STGKLRPDEPAQPLSRDDAL) are disordered. Positions 63 to 78 (LRPDEPAQPLSRDDAL) are enriched in basic and acidic residues.

This sequence belongs to the GatC family. As to quaternary structure, heterotrimer of A, B and C subunits.

The enzyme catalyses L-glutamyl-tRNA(Gln) + L-glutamine + ATP + H2O = L-glutaminyl-tRNA(Gln) + L-glutamate + ADP + phosphate + H(+). It carries out the reaction L-aspartyl-tRNA(Asn) + L-glutamine + ATP + H2O = L-asparaginyl-tRNA(Asn) + L-glutamate + ADP + phosphate + 2 H(+). In terms of biological role, allows the formation of correctly charged Asn-tRNA(Asn) or Gln-tRNA(Gln) through the transamidation of misacylated Asp-tRNA(Asn) or Glu-tRNA(Gln) in organisms which lack either or both of asparaginyl-tRNA or glutaminyl-tRNA synthetases. The reaction takes place in the presence of glutamine and ATP through an activated phospho-Asp-tRNA(Asn) or phospho-Glu-tRNA(Gln). This Metallosphaera sedula (strain ATCC 51363 / DSM 5348 / JCM 9185 / NBRC 15509 / TH2) protein is Aspartyl/glutamyl-tRNA(Asn/Gln) amidotransferase subunit C.